The primary structure comprises 579 residues: Insulin-like growth factor 2 mRNA-binding protein 3 (579 aa).

RRM domains lie at 2–75 and 81–156; these read NKLY…HSVP and RKLQ…YIPD. Positions 158–192 are disordered; the sequence is TAAQQNPSPQLRGRRGPGQRGSSRQASPGSVSKQK. Serine 165 carries the post-translational modification Phosphoserine. Residue serine 184 is modified to Phosphoserine; by MTOR. KH domains are found at residues 195 to 260, 276 to 343, and 405 to 470; these read DLPL…CKSI, EIPL…EEEI, and TETV…QGRI. Residues lysine 450 and lysine 475 each participate in a glycyl lysine isopeptide (Lys-Gly) (interchain with G-Cter in SUMO2) cross-link. One can recognise a KH 4 domain in the interval 487-553; sequence KLEAHIRVPS…YACQVAQRKI (67 aa). Threonine 528 carries the phosphothreonine modification.

It belongs to the RRM IMP/VICKZ family. As to quaternary structure, can form homooligomers and heterooligomers with IGF2BP1 and IGF2BP3 in an RNA-dependent manner. Interacts with IGF2BP1. Interacts with ELAVL1, DHX9, HNRNPU, MATR3 and PABPC1. In terms of tissue distribution, expressed in oocytes, spermatogonia and spermatocytes (at protein level).

It localises to the nucleus. Its subcellular location is the cytoplasm. It is found in the P-body. The protein localises to the stress granule. RNA-binding factor that may recruit target transcripts to cytoplasmic protein-RNA complexes (mRNPs). This transcript 'caging' into mRNPs allows mRNA transport and transient storage. It also modulates the rate and location at which target transcripts encounter the translational apparatus and shields them from endonuclease attacks or microRNA-mediated degradation. Preferentially binds to N6-methyladenosine (m6A)-containing mRNAs and increases their stability. Binds to the 3'-UTR of CD44 mRNA and stabilizes it, hence promotes cell adhesion and invadopodia formation. Binds to beta-actin/ACTB and MYC transcripts. Increases MYC mRNA stability by binding to the coding region instability determinant (CRD) and binding is enhanced by m6A-modification of the CRD. Binds to the 5'-UTR of the insulin-like growth factor 2 (IGF2) mRNAs. The protein is Insulin-like growth factor 2 mRNA-binding protein 3 (Igf2bp3) of Mus musculus (Mouse).